A 367-amino-acid chain; its full sequence is MADWYRLAWPLICGLDPERAHHLAIRALALGLAGHDRAADDPVLACSLWGRRFANPLGLAAGFDKNGEVADALFDLGFGFVEVGTVTPRPQAGNPRPRLFRLTQDRAVINRMGFNNQGMEAMAARFVRARPRGVLGINLGKNKTTEDAAGDYEAGIAKLAPLADYLVINVSSPNTPGLRALQGREPLSLLIARARAALDAACPGLRPPLLLKVAPDLTDEDMADIAEVALGGGLDGLICTNTTIARPKSLVSDHAGETGGLSGLPLRYRARQVIARLYGLTKGALPLIGVGGIGDGAEAYARIRAGASLIQIYSALVYEGPGLVGRIKRDLAQRLRADGFASVAEAVGADHRDPKGASGKLAPRSPL.

Residues 61 to 65 (AGFDK) and T85 contribute to the FMN site. Substrate is bound at residue K65. A substrate-binding site is contributed by 110–114 (NRMGF). Residues N138 and N169 each coordinate FMN. N169 contributes to the substrate binding site. The active-site Nucleophile is S172. N174 serves as a coordination point for substrate. 2 residues coordinate FMN: K212 and T240. 241 to 242 (NT) lines the substrate pocket. Residues G263, G292, and 313 to 314 (YS) each bind FMN.

It belongs to the dihydroorotate dehydrogenase family. Type 2 subfamily. Monomer. FMN is required as a cofactor.

Its subcellular location is the cell membrane. It catalyses the reaction (S)-dihydroorotate + a quinone = orotate + a quinol. It participates in pyrimidine metabolism; UMP biosynthesis via de novo pathway; orotate from (S)-dihydroorotate (quinone route): step 1/1. Catalyzes the conversion of dihydroorotate to orotate with quinone as electron acceptor. This Rhodospirillum rubrum (strain ATCC 11170 / ATH 1.1.1 / DSM 467 / LMG 4362 / NCIMB 8255 / S1) protein is Dihydroorotate dehydrogenase (quinone).